Consider the following 334-residue polypeptide: Phenylalanine--tRNA ligase alpha subunit (334 aa).

Glu249 serves as a coordination point for Mg(2+).

Belongs to the class-II aminoacyl-tRNA synthetase family. Phe-tRNA synthetase alpha subunit type 1 subfamily. In terms of assembly, tetramer of two alpha and two beta subunits. Mg(2+) is required as a cofactor.

It is found in the cytoplasm. It catalyses the reaction tRNA(Phe) + L-phenylalanine + ATP = L-phenylalanyl-tRNA(Phe) + AMP + diphosphate + H(+). This chain is Phenylalanine--tRNA ligase alpha subunit, found in Desulfatibacillum aliphaticivorans.